The primary structure comprises 133 residues: Small ribosomal subunit protein uS9 (133 aa).

Residues 97-133 (MKQELKSQGFLTRDPRKKERKKYGRKKARKSFQFSKR) form a disordered region. Positions 114-133 (KERKKYGRKKARKSFQFSKR) are enriched in basic residues.

Belongs to the universal ribosomal protein uS9 family.

This is Small ribosomal subunit protein uS9 (rpsI) from Chlamydia muridarum (strain MoPn / Nigg).